The following is a 201-amino-acid chain: Probable GTP-binding protein EngB (201 aa).

The region spanning Pro-21 to Val-191 is the EngB-type G domain. GTP contacts are provided by residues Gly-29–Ser-36, Gly-56–Ser-60, Asp-75–Gly-78, Thr-142–Asp-145, and Val-168–Ser-172. Positions 36 and 58 each coordinate Mg(2+).

The protein belongs to the TRAFAC class TrmE-Era-EngA-EngB-Septin-like GTPase superfamily. EngB GTPase family. It depends on Mg(2+) as a cofactor.

Its function is as follows. Necessary for normal cell division and for the maintenance of normal septation. In Desulfovibrio desulfuricans (strain ATCC 27774 / DSM 6949 / MB), this protein is Probable GTP-binding protein EngB.